Consider the following 411-residue polypeptide: Putative competence-damage inducible protein (411 aa).

Belongs to the CinA family.

In Caldicellulosiruptor bescii (strain ATCC BAA-1888 / DSM 6725 / KCTC 15123 / Z-1320) (Anaerocellum thermophilum), this protein is Putative competence-damage inducible protein.